We begin with the raw amino-acid sequence, 189 residues long: Protein Rex (189 aa).

The span at 1–16 shows a compositional bias: basic residues; it reads MPKTRRRPRRSQRKRP. Positions 1 to 27 are disordered; that stretch reads MPKTRRRPRRSQRKRPPTPWPTSQGLD. The Nuclear localization signal, and RNA-binding (RxRE) motif lies at 2 to 18; the sequence is PKTRRRPRRSQRKRPPT. The tract at residues 56–70 is homomultimerization; sequence RPAYIVTPYWPPVQS. At S70 the chain carries Phosphoserine; by host. A Nuclear export signal motif is present at residues 82-93; the sequence is LSAQLYSSLSLD. Positions 87–189 are disordered; it reads YSSLSLDSPP…PPSPGPSCPM (103 aa). Residues 105-114 show a composition bias toward low complexity; it reads PLRSLPRQSL. The homomultimerization stretch occupies residues 123 to 131; it reads PSSRPCANT. Residues 143–164 show a composition bias toward polar residues; the sequence is LGSTSQPCLFQTPDSGPKTCTP. A Phosphothreonine; by host modification is found at T174. S177 carries the post-translational modification Phosphoserine; by host. The span at 178 to 189 shows a compositional bias: pro residues; that stretch reads FPPPSPGPSCPM.

The protein belongs to the deltaretrovirus Rex protein family. In terms of assembly, homomultimer. Multimeric assembly is essential for activity and involves XPO1. Binds to human XPO1 and KPNB1. Interacts (via N-terminal nuclear localization signal) with human NPM1. In terms of processing, phosphorylated.

The protein localises to the host nucleus. It localises to the host nucleolus. Its subcellular location is the host cytoplasm. Functionally, rex escorts unspliced gag-pro-pol and singly spliced env mRNAs out of the nucleus of infected cells. These mRNAs carry a recognition sequence called Rex responsive element (RxRE or XRE) located at the 3' region of the long terminal repeat (LTR). This function is essential since most HTLV proteins are translated from unspliced or partially spliced pre-mRNAs that cannot exit the nucleus by the pathway used by fully processed cellular mRNAs. Rex itself is translated from a fully spliced mRNA that probably readily exits the nucleus. Rex's nuclear localization signal (NLS) binds directly to KPNB1/importin beta-1 without previous binding to KPNA1/importin alpha-1. KPNB1 binds to the GDP bound form of RAN (Ran-GDP) and targets Rex to the nucleus. In the nucleus, the conversion from Ran-GDP to Ran-GTP dissociates Rex from KPNB1 and allows Rex's binding to the RRE in viral pre-mRNAs. Rex multimerizes on the RRE via cooperative assembly. This multimerization is critical for its full biological activity, since it may shield the viral RNA from being spliced or down-regulated, and probably exposes Rex's nuclear export signal (NES) to the surface. Rex can then form a complex with XPO1/CRM1, RANBP3 and Ran-GTP, leading to nuclear export of the complex. Conversion from Ran-GTP to Ran-GDP mediates dissociation of the Rex/RRE/XPO1/RANBP3/RAN complex, so that Rex can return to the nucleus for a subsequent round of export. The sequence is that of Protein Rex from Human T-cell leukemia virus 1 (isolate Caribbea HS-35 subtype A) (HTLV-1).